A 298-amino-acid polypeptide reads, in one-letter code: MSIPLPDVALTELSATRAPLDWVGMDGIDVPILLDEPEFAYPVHARAEVQVDLPDPAIKGIHMSRLYRLLDGFAGRDRLNPASLAVLLREMVFSHADCNSTRARLTLAFSLLCRRPALLTQGLSGWKSYPVRLEAVWEAGRLSLDATLQIGYSSTCPCSAALTRQLIEQAFVERFSAAGQVEPAAVAAWLQRNATLATPHSQRSVAEVRVRIPEGATRLGLLALIERIETCLGTPVQTAVKRADEQAFARLNGQNLMYVEDAARKIRQAVAEGFSQFSVSVRHVESLHPHDAVASSSS.

Belongs to the GTP cyclohydrolase IV family.

The catalysed reaction is GTP + H2O = 7,8-dihydroneopterin 3'-triphosphate + formate + H(+). It participates in cofactor biosynthesis; 7,8-dihydroneopterin triphosphate biosynthesis; 7,8-dihydroneopterin triphosphate from GTP: step 1/1. Converts GTP to 7,8-dihydroneopterin triphosphate. This Azotobacter vinelandii (strain DJ / ATCC BAA-1303) protein is GTP cyclohydrolase FolE2.